The following is a 102-amino-acid chain: Small ribosomal subunit protein eS24 (102 aa).

It belongs to the eukaryotic ribosomal protein eS24 family.

In Halorubrum lacusprofundi (strain ATCC 49239 / DSM 5036 / JCM 8891 / ACAM 34), this protein is Small ribosomal subunit protein eS24.